A 142-amino-acid polypeptide reads, in one-letter code: Large ribosomal subunit protein uL13 (142 aa).

Belongs to the universal ribosomal protein uL13 family. In terms of assembly, part of the 50S ribosomal subunit.

Its function is as follows. This protein is one of the early assembly proteins of the 50S ribosomal subunit, although it is not seen to bind rRNA by itself. It is important during the early stages of 50S assembly. The chain is Large ribosomal subunit protein uL13 from Acidovorax sp. (strain JS42).